We begin with the raw amino-acid sequence, 473 residues long: MKFLNTFSLLSLAIIGSKAMKNISSKELVKDLTIGWSLGNTLDATCFETLDYNKNQIASETCWGNVKTTQELYYKLSDLGFNTFRIPTTWSGHFGNAPDYKINDQWMKRVHEIVDYAINTGGYAILNIHHETWNHAFQKNLESAKKILVAIWKQIAAEFADYDEHLIFEGMNEPRKVGDPAEWNGGDYEGWNFVNEMNDLFVKTIRATGGNNALRHLMIPTYAACINDGAINNFKFPSGDDKVIVSLHSYSPYNFALNNGAGAISNFYDGSEIDWAMNTINSKFISRGIPVIIGEFGAMNRNNEDDRERWAEYYIKKATSIGVPCVIWDNGYFEGEGERFGLINRSTLQVVYPKLVNGLIKGLGNSIKTRTTIRRTTTTTTSQSQPTNNDSCFSVNLGYSCCNGCEVEYTDSDGEWGVENGNWCGIKSSCSNTSRICWSEKLGYPCCQNTSSVVYTDNDGKWGVENGNWCGIY.

A signal peptide spans 1–17 (MKFLNTFSLLSLAIIGS). Residues 18-367 (KAMKNISSKE…GLIKGLGNSI (350 aa)) form a catalytic region. Residue Glu-173 is the Proton donor of the active site. Glu-295 (nucleophile) is an active-site residue. Positions 365-387 (NSIKTRTTIRRTTTTTTSQSQPT) are linker. 2 consecutive CBM10 domains span residues 391 to 427 (SCFS…CGIK) and 436 to 473 (ICWS…CGIY).

It belongs to the glycosyl hydrolase 5 (cellulase A) family.

It carries out the reaction Endohydrolysis of (1-&gt;4)-beta-D-glucosidic linkages in cellulose, lichenin and cereal beta-D-glucans.. Functionally, rate of hydrolysis of cellulo-oligosaccharides increased with increasing chain length from cellotriose to cellopentaose. The chain is Endoglucanase B (CELB) from Neocallimastix patriciarum (Rumen fungus).